A 427-amino-acid chain; its full sequence is Enolase (427 aa).

Gln162 contacts (2R)-2-phosphoglycerate. Glu206 functions as the Proton donor in the catalytic mechanism. Mg(2+) is bound by residues Asp243, Glu286, and Asp313. Lys338, Arg367, Ser368, and Lys389 together coordinate (2R)-2-phosphoglycerate. The active-site Proton acceptor is Lys338.

The protein belongs to the enolase family. Mg(2+) is required as a cofactor.

Its subcellular location is the cytoplasm. It is found in the secreted. It localises to the cell surface. The enzyme catalyses (2R)-2-phosphoglycerate = phosphoenolpyruvate + H2O. The protein operates within carbohydrate degradation; glycolysis; pyruvate from D-glyceraldehyde 3-phosphate: step 4/5. Its function is as follows. Catalyzes the reversible conversion of 2-phosphoglycerate (2-PG) into phosphoenolpyruvate (PEP). It is essential for the degradation of carbohydrates via glycolysis. The protein is Enolase of Methanopyrus kandleri (strain AV19 / DSM 6324 / JCM 9639 / NBRC 100938).